Reading from the N-terminus, the 865-residue chain is MTIEYTKNYHHLTRIATFCALLYCNTAFSAELVEYDHTFLMGQNASNIDLSRYSEGNPAIPGVYDVSVYVNDQPIINQSITFVAIEGKKNAQACITLKNLLQFHINSPDINNEKAVLLARDETLGNCLNLTEIIPQASVRYDVNDQRLDIDVPQAWVMKNYQNYVDPSLWENGINAAMLSYNLNGYHSETPGRKNESIYAAFNGGMNLGAWRLRASGNYNWMTDSGSNYDFKNRYVQRDIASLRSQLILGESYTTGETFDSVSIRGIRLYSDSRMLPPTLASFAPIIHGVANTNAKVTITQGGYKIYETTVPPGAFVIDDLSPSGYGSDLIVTIEESDGSKRTFSQPFSSVVQMLRPGVGRWDISGGQVLKDDIQDEPNLFQASYYYGLNNYLTGYTGIQITDNNYTAGLLGLGLNTSVGAFSFDVTHSNVRIPDDKTYQGQSYRVSWNKLFEETSTSLNIAAYRYSTQNYLGLNDALTLIDEVKHPEQDLEPKSMRNYSRMKNQVTVSINQPLKFEKKDYGSFYLSGSWSDYWASGQNRSNYSIGYSNSTSWGSYSVSAQRSWNEDGDTDDSVYLSFTIPIEKLLGTEQRTSGFQSIDTQISSDFKGNNQLNVSSSGYSDNARVSYSVNTGYTMNKASKDLSYVGGYASYESPWGTLAGSISANSDNSRQVSLSTDGGFVLHSGGLTFSNDSFSDSDTLAVVQAPGAQGARINYGNSTIDRWGYGVTSALSPYHENRIALDINDLENDVELKSTSAVAVPRQGSVVFADFETVQGQSAIMNITRSDGKNIPFAADIYDEQGNVIGNVGQGGQAFVRGIEQQGNISIKWLEQSKPVSCLAHYQQSPEAEKIAQSIILNGIRCQIQ.

An N-terminal signal peptide occupies residues 1–29 (MTIEYTKNYHHLTRIATFCALLYCNTAFS). A disulfide bridge links Cys-838 with Cys-862.

This sequence belongs to the fimbrial export usher family.

Its subcellular location is the cell outer membrane. Part of the yadCKLM-htrE-yadVN fimbrial operon. Could contribute to adhesion to various surfaces in specific environmental niches. Probably involved in the export and assembly of fimbrial subunits across the outer membrane. The chain is Outer membrane usher protein HtrE (htrE) from Escherichia coli (strain K12).